The primary structure comprises 148 residues: Large ribosomal subunit protein uL15 (148 aa).

The segment covering 1–30 (MSTHKKKTRKLRGHVSHGHGRIGKHRKHPG) has biased composition (basic residues). Residues 1–37 (MSTHKKKTRKLRGHVSHGHGRIGKHRKHPGGRGNAGG) form a disordered region.

Belongs to the universal ribosomal protein uL15 family.

This is Large ribosomal subunit protein uL15 (RpL27A) from Tenebrio molitor (Yellow mealworm beetle).